Consider the following 244-residue polypeptide: MHSQPYLLSPAPNNTPFPPAEHALREPNGLLAIGGDLTPQRLLAAYRSGIFPWFTEGQPPLWWSPDPRTVFHSDSIHLSRRFRRSLRTSTWRVRADTMFAAVIDACASTPRRGQDGTWITANMREAYLTLHQHGYAHSVEVFDGTMLVGGIYGVAIGRMFFGESMFSTHNGASKIALASLAYFLHTHSVPLIDAQVENQHLLNLGAERWPRRDFLTYVRRLITQTELPACWSVLFGEKLSRDLV.

Residues 1–22 (MHSQPYLLSPAPNNTPFPPAEH) form a disordered region.

Belongs to the L/F-transferase family.

Its subcellular location is the cytoplasm. It carries out the reaction N-terminal L-lysyl-[protein] + L-leucyl-tRNA(Leu) = N-terminal L-leucyl-L-lysyl-[protein] + tRNA(Leu) + H(+). The catalysed reaction is N-terminal L-arginyl-[protein] + L-leucyl-tRNA(Leu) = N-terminal L-leucyl-L-arginyl-[protein] + tRNA(Leu) + H(+). The enzyme catalyses L-phenylalanyl-tRNA(Phe) + an N-terminal L-alpha-aminoacyl-[protein] = an N-terminal L-phenylalanyl-L-alpha-aminoacyl-[protein] + tRNA(Phe). Its function is as follows. Functions in the N-end rule pathway of protein degradation where it conjugates Leu, Phe and, less efficiently, Met from aminoacyl-tRNAs to the N-termini of proteins containing an N-terminal arginine or lysine. The protein is Leucyl/phenylalanyl-tRNA--protein transferase of Xylella fastidiosa (strain M12).